The sequence spans 371 residues: Putative glutamate--cysteine ligase 2 (371 aa).

The protein belongs to the glutamate--cysteine ligase type 2 family. YbdK subfamily. Homodimer.

It catalyses the reaction L-cysteine + L-glutamate + ATP = gamma-L-glutamyl-L-cysteine + ADP + phosphate + H(+). In terms of biological role, ATP-dependent carboxylate-amine ligase which exhibits weak glutamate--cysteine ligase activity. This Cronobacter sakazakii (strain ATCC BAA-894) (Enterobacter sakazakii) protein is Putative glutamate--cysteine ligase 2.